The following is a 534-amino-acid chain: Bifunctional pantoate ligase/cytidylate kinase (534 aa).

Residues methionine 1 to threonine 302 are pantoate--beta-alanine ligase. Methionine 48–histidine 55 lines the ATP pocket. The Proton donor role is filled by histidine 55. Residue glutamine 79 participates in (R)-pantoate binding. A beta-alanine-binding site is contributed by glutamine 79. Glycine 172–aspartate 175 contacts ATP. Glutamine 178 contacts (R)-pantoate. ATP-binding positions include valine 201 and cysteine 209–arginine 212. Positions isoleucine 303–tryptophan 534 are cytidylate kinase.

It in the N-terminal section; belongs to the pantothenate synthetase family. In the C-terminal section; belongs to the cytidylate kinase family. Type 1 subfamily.

Its subcellular location is the cytoplasm. The enzyme catalyses (R)-pantoate + beta-alanine + ATP = (R)-pantothenate + AMP + diphosphate + H(+). It catalyses the reaction CMP + ATP = CDP + ADP. It carries out the reaction dCMP + ATP = dCDP + ADP. It participates in cofactor biosynthesis; (R)-pantothenate biosynthesis; (R)-pantothenate from (R)-pantoate and beta-alanine: step 1/1. Its function is as follows. Catalyzes the condensation of pantoate with beta-alanine in an ATP-dependent reaction via a pantoyl-adenylate intermediate. Functionally, catalyzes the transfer of a phosphate group from ATP to either CMP or dCMP to form CDP or dCDP and ADP, respectively. This is Bifunctional pantoate ligase/cytidylate kinase from Trichormus variabilis (strain ATCC 29413 / PCC 7937) (Anabaena variabilis).